A 95-amino-acid polypeptide reads, in one-letter code: Integration host factor subunit beta (95 aa).

This sequence belongs to the bacterial histone-like protein family. As to quaternary structure, heterodimer of an alpha and a beta chain.

This protein is one of the two subunits of integration host factor, a specific DNA-binding protein that functions in genetic recombination as well as in transcriptional and translational control. The chain is Integration host factor subunit beta from Shewanella pealeana (strain ATCC 700345 / ANG-SQ1).